Consider the following 512-residue polypeptide: ATP synthase subunit alpha (512 aa).

169–176 (GDRQTGKT) provides a ligand contact to ATP.

Belongs to the ATPase alpha/beta chains family. F-type ATPases have 2 components, CF(1) - the catalytic core - and CF(0) - the membrane proton channel. CF(1) has five subunits: alpha(3), beta(3), gamma(1), delta(1), epsilon(1). CF(0) has three main subunits: a(1), b(2) and c(9-12). The alpha and beta chains form an alternating ring which encloses part of the gamma chain. CF(1) is attached to CF(0) by a central stalk formed by the gamma and epsilon chains, while a peripheral stalk is formed by the delta and b chains.

It localises to the cell inner membrane. The catalysed reaction is ATP + H2O + 4 H(+)(in) = ADP + phosphate + 5 H(+)(out). Its function is as follows. Produces ATP from ADP in the presence of a proton gradient across the membrane. The alpha chain is a regulatory subunit. In Leptothrix cholodnii (strain ATCC 51168 / LMG 8142 / SP-6) (Leptothrix discophora (strain SP-6)), this protein is ATP synthase subunit alpha.